We begin with the raw amino-acid sequence, 299 residues long: Apolipoprotein E (299 aa).

The signal sequence occupies residues 1-18 (MKVLCTVLVVTLLAGCRA). Residues 74-245 (VLMEDTMKAV…RLEEVREQME (172 aa)) form an 8 X 22 AA approximate tandem repeats region. Tandem repeats lie at residues 75 to 95 (LMEDTMKAVKAYKSELEQELV), 96 to 117 (PMAEDTKARLSKELQAAQARLG), 118 to 139 (ADMEEVRNRLALYRNEMQAMLG), 140 to 161 (QSAEELRARLASHLRKLRKRML), 162 to 183 (RDAEDLQKRLAVYKDGASEGAE), 184 to 206 (RGVSAIRERLGSLVEQSRVRAAL), 207 to 225 (TSQPLQERAQAWGKQLRGR), and 224 to 242 (GRLEEVRGQAQDRLEEVRE). Methionine 137 is modified (methionine sulfoxide). Phosphoserine is present on serine 141. The LDL and other lipoprotein receptors binding stretch occupies residues 152–162 (HLRKLRKRMLR). Residue 156–159 (LRKR) coordinates heparin. The segment at 205–273 (ALTSQPLQER…GWFEPMVEDM (69 aa)) is lipid-binding and lipoprotein association. 219–226 (GKQLRGRL) lines the heparin pocket. Positions 261-273 (RLKGWFEPMVEDM) are specificity for association with VLDL.

It belongs to the apolipoprotein A1/A4/E family. Homotetramer. May interact with ABCA1; functionally associated with ABCA1 in the biogenesis of HDLs. May interact with APP/A4 amyloid-beta peptide; the interaction is extremely stable in vitro but its physiological significance is unclear. May interact with MAPT. May interact with MAP2. In the cerebrospinal fluid, interacts with secreted SORL1. Interacts with PMEL; this allows the loading of PMEL luminal fragment on ILVs to induce fibril nucleation. In terms of processing, APOE exists as multiple glycosylated and sialylated glycoforms within cells and in plasma. The extent of glycosylation and sialylation are tissue and context specific. Post-translationally, glycated in plasma VLDL. Phosphorylated by FAM20C in the extracellular medium.

It localises to the secreted. The protein resides in the extracellular space. The protein localises to the extracellular matrix. It is found in the extracellular vesicle. Its subcellular location is the endosome. It localises to the multivesicular body. Its function is as follows. APOE is an apolipoprotein, a protein associating with lipid particles, that mainly functions in lipoprotein-mediated lipid transport between organs via the plasma and interstitial fluids. APOE is a core component of plasma lipoproteins and is involved in their production, conversion and clearance. Apolipoproteins are amphipathic molecules that interact both with lipids of the lipoprotein particle core and the aqueous environment of the plasma. As such, APOE associates with chylomicrons, chylomicron remnants, very low density lipoproteins (VLDL) and intermediate density lipoproteins (IDL) but shows a preferential binding to high-density lipoproteins (HDL). It also binds a wide range of cellular receptors including the LDL receptor/LDLR, the LDL receptor-related proteins LRP1, LRP2 and LRP8 and the very low-density lipoprotein receptor/VLDLR that mediate the cellular uptake of the APOE-containing lipoprotein particles. Finally, APOE also has a heparin-binding activity and binds heparan-sulfate proteoglycans on the surface of cells, a property that supports the capture and the receptor-mediated uptake of APOE-containing lipoproteins by cells. A main function of APOE is to mediate lipoprotein clearance through the uptake of chylomicrons, VLDLs, and HDLs by hepatocytes. APOE is also involved in the biosynthesis by the liver of VLDLs as well as their uptake by peripheral tissues ensuring the delivery of triglycerides and energy storage in muscle, heart and adipose tissues. By participating in the lipoprotein-mediated distribution of lipids among tissues, APOE plays a critical role in plasma and tissues lipid homeostasis. APOE is also involved in two steps of reverse cholesterol transport, the HDLs-mediated transport of cholesterol from peripheral tissues to the liver, and thereby plays an important role in cholesterol homeostasis. First, it is functionally associated with ABCA1 in the biogenesis of HDLs in tissues. Second, it is enriched in circulating HDLs and mediates their uptake by hepatocytes. APOE also plays an important role in lipid transport in the central nervous system, regulating neuron survival and sprouting. This chain is Apolipoprotein E (Apoe), found in Tympanoctomys barrerae (Plains viscacha rat).